A 281-amino-acid chain; its full sequence is Small ribosomal subunit protein uS2 (281 aa).

The segment at 233-281 is disordered; sequence NKAEGEAAEQPMAAWEKELLTNEAPAEASAEAAAPAAAEGETAEAPKAE. Residues 255–275 show a composition bias toward low complexity; that stretch reads EAPAEASAEAAAPAAAEGETA.

This sequence belongs to the universal ribosomal protein uS2 family.

The polypeptide is Small ribosomal subunit protein uS2 (Bifidobacterium longum (strain DJO10A)).